The sequence spans 257 residues: Zinc transporter ZupT (257 aa).

3 helical membrane passes run 5–25, 32–52, and 61–81; these read LILT…GVLG, LLAF…LMEM, and GMSP…YFGL. Fe(2+) contacts are provided by asparagine 120 and glutamate 123. Zn(2+)-binding residues include glutamate 123 and histidine 148. Transmembrane regions (helical) follow at residues 137-157, 171-191, 195-215, and 236-256; these read LGFG…LAVA, ILWA…AWLI, MISP…MVAL, and GVLC…TAGI. 3 residues coordinate Fe(2+): asparagine 149, glutamate 152, and glutamate 181. Glutamate 152 lines the Zn(2+) pocket.

The protein belongs to the ZIP transporter (TC 2.A.5) family. ZupT subfamily.

The protein resides in the cell inner membrane. The catalysed reaction is Zn(2+)(in) = Zn(2+)(out). In terms of biological role, mediates zinc uptake. May also transport other divalent cations. The sequence is that of Zinc transporter ZupT from Escherichia coli O127:H6 (strain E2348/69 / EPEC).